A 56-amino-acid polypeptide reads, in one-letter code: Pituitary adenylate cyclase-activating polypeptide (56 aa).

Residues 42–50 (VKKYLAAVL) form an important for receptor binding region. The residue at position 50 (leucine 50) is a Leucine amide.

The protein belongs to the glucagon family. As to quaternary structure, interacts with ADCYAP1R1 (via N-terminal extracellular domain).

Its subcellular location is the secreted. Its function is as follows. PACAP is a neuropeptide involved in diverse array of physiological processes through activating the PACAP subfamily of class B1 G protein-coupled receptors: VIP receptor 1 (VIPR1), VIP receptor 2 (VIPR2), and PACAP type I receptor (ADCYAP1R1). Exerts neuroprotective and general cytoprotective effects due to anti-apoptotic, anti-inflammatory, and antioxidant actions. In Heloderma suspectum (Gila monster), this protein is Pituitary adenylate cyclase-activating polypeptide (Adcyap1).